Consider the following 205-residue polypeptide: Peptidyl-tRNA hydrolase (205 aa).

Position 18 (tyrosine 18) interacts with tRNA. Histidine 23 acts as the Proton acceptor in catalysis. TRNA is bound by residues tyrosine 69, asparagine 71, and asparagine 117.

This sequence belongs to the PTH family. In terms of assembly, monomer.

It is found in the cytoplasm. It catalyses the reaction an N-acyl-L-alpha-aminoacyl-tRNA + H2O = an N-acyl-L-amino acid + a tRNA + H(+). Hydrolyzes ribosome-free peptidyl-tRNAs (with 1 or more amino acids incorporated), which drop off the ribosome during protein synthesis, or as a result of ribosome stalling. Functionally, catalyzes the release of premature peptidyl moieties from peptidyl-tRNA molecules trapped in stalled 50S ribosomal subunits, and thus maintains levels of free tRNAs and 50S ribosomes. The sequence is that of Peptidyl-tRNA hydrolase from Synechococcus sp. (strain CC9605).